The primary structure comprises 122 residues: UPF0102 protein NGR_c36770 (122 aa).

This sequence belongs to the UPF0102 family.

The chain is UPF0102 protein NGR_c36770 from Sinorhizobium fredii (strain NBRC 101917 / NGR234).